Consider the following 276-residue polypeptide: Transmembrane protein 81 (276 aa).

An N-terminal signal peptide occupies residues 1–24 (MKTSATSFIPGSLVLAFCLPVVAT). Residues 25 to 225 (SPKTLAIPEK…QHPPWKKKVA (201 aa)) are Extracellular-facing. A glycan (N-linked (GlcNAc...) asparagine) is linked at Asn45. Residues 83–176 (TNWLCGMLHF…NLRLVKRLYF (94 aa)) enclose the Ig-like domain. Cys104 and Cys160 form a disulfide bridge. Asn211 is a glycosylation site (N-linked (GlcNAc...) asparagine). A helical transmembrane segment spans residues 226-246 (IAVGIGVAGGVTGGVLVSIVL). The Cytoplasmic portion of the chain corresponds to 247–276 (CGRLSVIHSSASLETLQALLPKGGMLRKPD).

As to quaternary structure, forms a complex with IZUMO1 and SPACA6 on spermatocyte cell membrane required for fertilization.

It is found in the cell membrane. Essential fertilization factor required for male fertility. Part of a conserved trimeric sperm complex with the essential fertilization factors IZUMO1 and SPACA6 which bridges sperm and oocyte membranes during fertilization by binding to IZUMO1R/JUNO on the oocyte. In Bos taurus (Bovine), this protein is Transmembrane protein 81 (TMEM81).